The sequence spans 638 residues: Threonine--tRNA ligase (638 aa).

The 63-residue stretch at 1 to 63 folds into the TGS domain; sequence MVMIQIELPD…TESGRLEIIT (63 aa). Residues 245 to 536 form a catalytic region; sequence DHRRIGRELD…LIEHYAGNFP (292 aa). 3 residues coordinate Zn(2+): C337, H388, and H513.

This sequence belongs to the class-II aminoacyl-tRNA synthetase family. As to quaternary structure, homodimer. The cofactor is Zn(2+).

It is found in the cytoplasm. The catalysed reaction is tRNA(Thr) + L-threonine + ATP = L-threonyl-tRNA(Thr) + AMP + diphosphate + H(+). Functionally, catalyzes the attachment of threonine to tRNA(Thr) in a two-step reaction: L-threonine is first activated by ATP to form Thr-AMP and then transferred to the acceptor end of tRNA(Thr). Also edits incorrectly charged L-seryl-tRNA(Thr). The chain is Threonine--tRNA ligase from Syntrophotalea carbinolica (strain DSM 2380 / NBRC 103641 / GraBd1) (Pelobacter carbinolicus).